The primary structure comprises 314 residues: ATP synthase gamma chain (314 aa).

It belongs to the ATPase gamma chain family. As to quaternary structure, F-type ATPases have 2 components, CF(1) - the catalytic core - and CF(0) - the membrane proton channel. CF(1) has five subunits: alpha(3), beta(3), gamma(1), delta(1), epsilon(1). CF(0) has three main subunits: a, b and c.

It is found in the cell inner membrane. Its function is as follows. Produces ATP from ADP in the presence of a proton gradient across the membrane. The gamma chain is believed to be important in regulating ATPase activity and the flow of protons through the CF(0) complex. The polypeptide is ATP synthase gamma chain (Gloeobacter violaceus (strain ATCC 29082 / PCC 7421)).